We begin with the raw amino-acid sequence, 361 residues long: Phospho-N-acetylmuramoyl-pentapeptide-transferase (361 aa).

Helical transmembrane passes span 25–45, 73–93, 97–117, 134–154, 168–188, 200–220, 237–257, 264–284, 289–309, and 338–358; these read RTVL…PAMI, TMGG…WADL, YVWI…VDDY, LFWQ…TAEL, VAVP…IVGT, GLAI…SYVA, AGEL…FLWF, VFMG…VTVI, IVML…MLQV, and QVVV…LSSL.

It belongs to the glycosyltransferase 4 family. MraY subfamily. Mg(2+) serves as cofactor.

Its subcellular location is the cell inner membrane. It catalyses the reaction UDP-N-acetyl-alpha-D-muramoyl-L-alanyl-gamma-D-glutamyl-meso-2,6-diaminopimeloyl-D-alanyl-D-alanine + di-trans,octa-cis-undecaprenyl phosphate = di-trans,octa-cis-undecaprenyl diphospho-N-acetyl-alpha-D-muramoyl-L-alanyl-D-glutamyl-meso-2,6-diaminopimeloyl-D-alanyl-D-alanine + UMP. It functions in the pathway cell wall biogenesis; peptidoglycan biosynthesis. Its function is as follows. Catalyzes the initial step of the lipid cycle reactions in the biosynthesis of the cell wall peptidoglycan: transfers peptidoglycan precursor phospho-MurNAc-pentapeptide from UDP-MurNAc-pentapeptide onto the lipid carrier undecaprenyl phosphate, yielding undecaprenyl-pyrophosphoryl-MurNAc-pentapeptide, known as lipid I. The chain is Phospho-N-acetylmuramoyl-pentapeptide-transferase from Nitrosospira multiformis (strain ATCC 25196 / NCIMB 11849 / C 71).